The chain runs to 137 residues: ATP synthase epsilon chain (137 aa).

It belongs to the ATPase epsilon chain family. F-type ATPases have 2 components, CF(1) - the catalytic core - and CF(0) - the membrane proton channel. CF(1) has five subunits: alpha(3), beta(3), gamma(1), delta(1), epsilon(1). CF(0) has three main subunits: a, b and c.

Its subcellular location is the cellular thylakoid membrane. Produces ATP from ADP in the presence of a proton gradient across the membrane. In Synechococcus elongatus (strain ATCC 33912 / PCC 7942 / FACHB-805) (Anacystis nidulans R2), this protein is ATP synthase epsilon chain (atpC).